Reading from the N-terminus, the 850-residue chain is Trimethylamine-N-oxide reductase (850 aa).

A signal peptide (tat-type signal) is located at residues Met1 to Ala39. Ser191 is a Mo-bis(molybdopterin guanine dinucleotide) binding site.

The protein belongs to the prokaryotic molybdopterin-containing oxidoreductase family. Mo-bis(molybdopterin guanine dinucleotide) serves as cofactor. In terms of processing, predicted to be exported by the Tat system. The position of the signal peptide cleavage has not been experimentally proven.

The protein localises to the periplasm. The catalysed reaction is trimethylamine + 2 Fe(III)-[cytochrome c] + H2O = trimethylamine N-oxide + 2 Fe(II)-[cytochrome c] + 3 H(+). Functionally, reduces trimethylamine-N-oxide (TMAO) into trimethylamine; an anaerobic reaction coupled to energy-yielding reactions. In Salmonella typhimurium (strain LT2 / SGSC1412 / ATCC 700720), this protein is Trimethylamine-N-oxide reductase (torA).